Here is a 495-residue protein sequence, read N- to C-terminus: Probable aminotransferase ACS12 (495 aa).

At Lys334 the chain carries N6-(pyridoxal phosphate)lysine.

The protein belongs to the class-I pyridoxal-phosphate-dependent aminotransferase family. Homodimer. Pyridoxal 5'-phosphate serves as cofactor. As to expression, expressed in roots. Expressed at low level in leaves, stems, flowers and siliques.

Functionally, probable aminotransferase. Does not have 1-aminocyclopropane-1-carboxylate synthase (ACS) activity, suggesting that it is not involved in ethylene biosynthesis. This is Probable aminotransferase ACS12 (ACS12) from Arabidopsis thaliana (Mouse-ear cress).